A 591-amino-acid chain; its full sequence is L-fucose isomerase (591 aa).

Residues glutamate 338 and aspartate 362 each act as proton acceptor in the active site. Mn(2+) contacts are provided by glutamate 338, aspartate 362, and histidine 529.

The protein belongs to the L-fucose isomerase family. It depends on Mn(2+) as a cofactor.

It is found in the cytoplasm. The catalysed reaction is L-fucose = L-fuculose. The protein operates within carbohydrate degradation; L-fucose degradation; L-lactaldehyde and glycerone phosphate from L-fucose: step 1/3. In terms of biological role, converts the aldose L-fucose into the corresponding ketose L-fuculose. The protein is L-fucose isomerase of Bacteroides thetaiotaomicron (strain ATCC 29148 / DSM 2079 / JCM 5827 / CCUG 10774 / NCTC 10582 / VPI-5482 / E50).